The primary structure comprises 333 residues: MACSRPPSQCDPTTLPPGPPAGRWPLPFSRRRREMSSNKEQRSAVFVILFALITILILYSSNSANEVFHYGSLRGRTRRPVNLKKWSFSSAYFPILGNKTLPSRCNQCVIITSSSHLLGTKLGPEIERAECTIRMNDAPTSGYSADVGNKTTFRVVAHSSVFRVLRKPQEFVNRTPETVFIFWGPPNKMQKPQGSLLRVIQRAGLMFPNMEAYAVSPARMQQFDDLFRGETGKDREKSHSWLSTGWFTMVIAVELCDHVHVYGMVPPDYCSQRPRLQRMPYHYYEPKGPDECVTYIQNEHSRKGNHHRFITEKRVFSSWAQLYGITFSHPSWT.

Over residues 1–12 (MACSRPPSQCDP) the composition is skewed to polar residues. The interval 1-27 (MACSRPPSQCDPTTLPPGPPAGRWPLP) is disordered. At 1–43 (MACSRPPSQCDPTTLPPGPPAGRWPLPFSRRRREMSSNKEQRS) the chain is on the cytoplasmic side. A helical; Signal-anchor for type II membrane protein transmembrane segment spans residues 44–64 (AVFVILFALITILILYSSNSA). At 65 to 333 (NEVFHYGSLR…GITFSHPSWT (269 aa)) the chain is on the lumenal side. The N-linked (GlcNAc...) asparagine glycan is linked to Asn-98. Cys-108 and Cys-256 form a disulfide bridge.

The protein belongs to the glycosyltransferase 29 family. Widely expressed, the gene expression is most abundant in colon, brain, liver, and heart.

It is found in the golgi apparatus membrane. The catalysed reaction is a ganglioside GM1b (d18:1(4E)) + CMP-N-acetyl-beta-neuraminate = a ganglioside GD1alpha (d18:1(4E)) + CMP + H(+). It carries out the reaction a ganglioside GD1a (d18:1(4E)) + CMP-N-acetyl-beta-neuraminate = a ganglioside GT1aalpha (d18:1(4E)) + CMP + H(+). It catalyses the reaction a ganglioside GT1b (d18:1(4E)) + CMP-N-acetyl-beta-neuraminate = a ganglioside GQ1balpha (d18:1(4E)) + CMP + H(+). The enzyme catalyses N-acetyl-alpha-neuraminosyl-(2-&gt;3)-beta-D-galactosyl-(1-&gt;3)-N-acetyl-beta-D-glucosaminyl-(1-&gt;3)-beta-D-galactosyl-(1-&gt;4)-beta-D-glucosyl-(1&lt;-&gt;1')-N-acyl-sphing-4-enine + CMP-N-acetyl-beta-neuraminate = N-acetyl-alpha-neuraminosyl-(2-&gt;3)-beta-D-galactosyl-(1-&gt;3)-[N-acetyl-alpha-neuraminosyl-(2-&gt;6)]-N-acetyl-beta-D-glucosaminyl-(1-&gt;3)-beta-D-galactosyl-(1-&gt;4)-beta-D-glucosyl-(1&lt;-&gt;1')-N-acyl-sphing-4-enine + CMP + H(+). The catalysed reaction is a globoside MSGG + CMP-N-acetyl-beta-neuraminate = a globoside DSGG + CMP + H(+). It carries out the reaction 3-O-[alpha-Neu5Ac-(2-&gt;3)-beta-D-Gal-(1-&gt;3)-alpha-D-GalNAc]-L-Ser-[protein] + CMP-N-acetyl-beta-neuraminate = a 3-O-{alpha-Neu5Ac-(2-&gt;3)-beta-D-Gal-(1-&gt;3)-[alpha-Neu5Ac-(2-&gt;6)]-alpha-D-GalNAc}-L-seryl-[protein] + CMP + H(+). It catalyses the reaction 3-O-[alpha-Neu5Ac-(2-&gt;3)-beta-D-Gal-(1-&gt;3)-alpha-D-GalNAc]-L-Thr-[protein] + CMP-N-acetyl-beta-neuraminate = a 3-O-{alpha-Neu5Ac-(2-&gt;3)-beta-D-Gal-(1-&gt;3)-[alpha-Neu5Ac-(2-&gt;6)]-alpha-D-GalNAc}-L-threonyl-[protein] + CMP + H(+). Transfers the sialyl group (N-acetyl-alpha-neuraminyl or NeuAc) from CMP-NeuAc onto glycolipids, forming an alpha-2,6-linkage. Produces branched type disialyl structures by transfer of a sialyl group onto the GalNAc or GlcNAc residue inside backbone core chains having a terminal sialic acid with an alpha-2,3-linkage on Gal. ST6GalNAcVI prefers glycolipids to glycoproteins, predominantly catalyzing the biosynthesis of ganglioside GD1alpha from GM1b. Also has activity toward GD1a and GT1b, and can generate DSGG (disialylgalactosylgloboside) from MSGG (monosialylgalactosylgloboside). Besides GMb1, MSGG and other glycolipids, it shows activity towards sialyl Lc4Cer generating disialyl Lc4Cer, which can lead to the synthesis of disialyl Lewis a (Le(a)), suggested to be a cancer-associated antigen. The sequence is that of Alpha-N-acetylgalactosaminide alpha-2,6-sialyltransferase 6 (St6galnac6) from Mus musculus (Mouse).